Here is a 201-residue protein sequence, read N- to C-terminus: Putative Ras-related protein Rab-1C (201 aa).

GTP contacts are provided by residues 15-23, 33-40, and 63-67; these read GDSGVGKSC, YTESYIST, and DTAGQ. An Effector region motif is present at residues 37-45; the sequence is YISTIGVDF. (Microbial infection) O-(2-cholinephosphoryl)serine is present on Ser76. Residues 121–124 and 151–153 each bind GTP; these read NKSD and SAK. Residues 174-201 are disordered; it reads GPGAASGGERPNLKIDSTPVKPAGGGCC. 2 S-geranylgeranyl cysteine lipidation sites follow: Cys200 and Cys201.

It belongs to the small GTPase superfamily. Rab family. (Microbial infection) Phosphocholinated at Ser-76 by L.pneumophila AnkX, leading to displace GDP dissociation inhibitors (GDI). Both GDP-bound and GTP-bound forms can be phosphocholinated. Dephosphocholinated by L.pneumophila Lem3, restoring accessibility to L.pneumophila GTPase effector LepB. Post-translationally, (Microbial infection) Glycosylated by S.typhimurium protein Ssek3: arginine GlcNAcylation prevents GTPase activity, thereby disrupting vesicular protein transport from the endoplasmic reticulum (ER) to the Golgi compartment.

The protein localises to the membrane. It localises to the cytoplasm. The catalysed reaction is GTP + H2O = GDP + phosphate + H(+). Functionally, protein transport. Probably involved in vesicular traffic. This Homo sapiens (Human) protein is Putative Ras-related protein Rab-1C (RAB1C).